Here is a 413-residue protein sequence, read N- to C-terminus: Gamma-glutamyl phosphate reductase (413 aa).

This sequence belongs to the gamma-glutamyl phosphate reductase family.

It localises to the cytoplasm. It carries out the reaction L-glutamate 5-semialdehyde + phosphate + NADP(+) = L-glutamyl 5-phosphate + NADPH + H(+). It functions in the pathway amino-acid biosynthesis; L-proline biosynthesis; L-glutamate 5-semialdehyde from L-glutamate: step 2/2. In terms of biological role, catalyzes the NADPH-dependent reduction of L-glutamate 5-phosphate into L-glutamate 5-semialdehyde and phosphate. The product spontaneously undergoes cyclization to form 1-pyrroline-5-carboxylate. The polypeptide is Gamma-glutamyl phosphate reductase (Geobacillus sp. (strain WCH70)).